The sequence spans 616 residues: Dihydroxy-acid dehydratase (616 aa).

A Mg(2+)-binding site is contributed by Asp-81. Cys-122 provides a ligand contact to [2Fe-2S] cluster. 2 residues coordinate Mg(2+): Asp-123 and Lys-124. Lys-124 carries the N6-carboxylysine modification. [2Fe-2S] cluster is bound at residue Cys-195. Glu-491 is a Mg(2+) binding site. Catalysis depends on Ser-517, which acts as the Proton acceptor.

Belongs to the IlvD/Edd family. In terms of assembly, homodimer. [2Fe-2S] cluster serves as cofactor. Requires Mg(2+) as cofactor.

The enzyme catalyses (2R)-2,3-dihydroxy-3-methylbutanoate = 3-methyl-2-oxobutanoate + H2O. It carries out the reaction (2R,3R)-2,3-dihydroxy-3-methylpentanoate = (S)-3-methyl-2-oxopentanoate + H2O. The protein operates within amino-acid biosynthesis; L-isoleucine biosynthesis; L-isoleucine from 2-oxobutanoate: step 3/4. It functions in the pathway amino-acid biosynthesis; L-valine biosynthesis; L-valine from pyruvate: step 3/4. Its function is as follows. Functions in the biosynthesis of branched-chain amino acids. Catalyzes the dehydration of (2R,3R)-2,3-dihydroxy-3-methylpentanoate (2,3-dihydroxy-3-methylvalerate) into 2-oxo-3-methylpentanoate (2-oxo-3-methylvalerate) and of (2R)-2,3-dihydroxy-3-methylbutanoate (2,3-dihydroxyisovalerate) into 2-oxo-3-methylbutanoate (2-oxoisovalerate), the penultimate precursor to L-isoleucine and L-valine, respectively. This chain is Dihydroxy-acid dehydratase, found in Shigella flexneri.